We begin with the raw amino-acid sequence, 498 residues long: ATP synthase subunit beta, chloroplastic (498 aa).

172–179 is a binding site for ATP; sequence GGAGVGKT.

This sequence belongs to the ATPase alpha/beta chains family. As to quaternary structure, F-type ATPases have 2 components, CF(1) - the catalytic core - and CF(0) - the membrane proton channel. CF(1) has five subunits: alpha(3), beta(3), gamma(1), delta(1), epsilon(1). CF(0) has four main subunits: a(1), b(1), b'(1) and c(9-12).

It is found in the plastid. The protein resides in the chloroplast thylakoid membrane. The catalysed reaction is ATP + H2O + 4 H(+)(in) = ADP + phosphate + 5 H(+)(out). In terms of biological role, produces ATP from ADP in the presence of a proton gradient across the membrane. The catalytic sites are hosted primarily by the beta subunits. In Platanus occidentalis (Sycamore), this protein is ATP synthase subunit beta, chloroplastic.